We begin with the raw amino-acid sequence, 165 residues long: UPF0303 protein BamMC406_1480 (165 aa).

This sequence belongs to the UPF0303 family.

This Burkholderia ambifaria (strain MC40-6) protein is UPF0303 protein BamMC406_1480.